A 207-amino-acid polypeptide reads, in one-letter code: Guanylate kinase (207 aa).

The Guanylate kinase-like domain occupies glycine 4–arginine 184. Alanine 11–serine 18 is a binding site for ATP.

The protein belongs to the guanylate kinase family.

The protein resides in the cytoplasm. It carries out the reaction GMP + ATP = GDP + ADP. Essential for recycling GMP and indirectly, cGMP. The chain is Guanylate kinase from Yersinia pestis bv. Antiqua (strain Antiqua).